Reading from the N-terminus, the 130-residue chain is Small ribosomal subunit protein uS9 (130 aa).

The protein belongs to the universal ribosomal protein uS9 family.

The sequence is that of Small ribosomal subunit protein uS9 from Pseudomonas fluorescens (strain Pf0-1).